The following is a 630-amino-acid chain: Glutathione hydrolase proenzyme 1 (630 aa).

Topologically, residues 1–49 are cytoplasmic; the sequence is MGINTSSAQSSGAASIARSSVNVKSGNRHLSSNKKSATSALEERASRPS. A helical; Signal-anchor for type II membrane protein transmembrane segment spans residues 50 to 70; it reads ILVTFLVLAGTILSLYIWPIL. Over 71–630 the chain is Lumenal; sequence SPDLFFANQR…SRKQAVAAAY (560 aa). N-linked (GlcNAc...) asparagine glycosylation occurs at Asn156. Residue Arg165 participates in L-glutamate binding. 4 N-linked (GlcNAc...) asparagine glycosylation sites follow: Asn180, Asn315, Asn397, and Asn417. Thr441 (nucleophile) is an active-site residue. Residues Ser459, Asn461, Asp483, 511–512, and 532–533 contribute to the L-glutamate site; these read SS and GG. N-linked (GlcNAc...) asparagine glycosylation is present at Asn612.

Belongs to the gamma-glutamyltransferase family. As to quaternary structure, heterodimer composed of the light and heavy chains. The active site is located in the light chain. Post-translationally, cleaved by autocatalysis into a large and a small subunit.

Its subcellular location is the endoplasmic reticulum membrane. The enzyme catalyses an N-terminal (5-L-glutamyl)-[peptide] + an alpha-amino acid = 5-L-glutamyl amino acid + an N-terminal L-alpha-aminoacyl-[peptide]. It catalyses the reaction glutathione + H2O = L-cysteinylglycine + L-glutamate. The catalysed reaction is an S-substituted glutathione + H2O = an S-substituted L-cysteinylglycine + L-glutamate. It functions in the pathway sulfur metabolism; glutathione metabolism. In terms of biological role, catalyzes the transfer of the gamma-glutamyl moiety of glutathione (GSH) and other gamma-glutamyl compounds to amino acids and peptides. Major GSH-degrading enzyme, catalyzing the hydrolytic release of L-glutamate from GSH. In Schizosaccharomyces pombe (strain 972 / ATCC 24843) (Fission yeast), this protein is Glutathione hydrolase proenzyme 1 (ggt1).